A 332-amino-acid polypeptide reads, in one-letter code: GTP 3',8-cyclase (332 aa).

Residues 9–220 enclose the Radical SAM core domain; the sequence is RFARKVDYLR…DQVRERIAER (212 aa). Arginine 18 lines the GTP pocket. Residues cysteine 25 and cysteine 29 each coordinate [4Fe-4S] cluster. Residue tyrosine 31 participates in S-adenosyl-L-methionine binding. Position 32 (cysteine 32) interacts with [4Fe-4S] cluster. Arginine 67 contacts GTP. Glycine 71 provides a ligand contact to S-adenosyl-L-methionine. A GTP-binding site is contributed by threonine 98. Serine 122 lines the S-adenosyl-L-methionine pocket. Lysine 159 provides a ligand contact to GTP. Methionine 193 is a binding site for S-adenosyl-L-methionine. Residues cysteine 258 and cysteine 261 each coordinate [4Fe-4S] cluster. Residue 263-265 participates in GTP binding; the sequence is RVR. Cysteine 275 contributes to the [4Fe-4S] cluster binding site.

It belongs to the radical SAM superfamily. MoaA family. In terms of assembly, monomer and homodimer. The cofactor is [4Fe-4S] cluster.

It carries out the reaction GTP + AH2 + S-adenosyl-L-methionine = (8S)-3',8-cyclo-7,8-dihydroguanosine 5'-triphosphate + 5'-deoxyadenosine + L-methionine + A + H(+). It functions in the pathway cofactor biosynthesis; molybdopterin biosynthesis. Its function is as follows. Catalyzes the cyclization of GTP to (8S)-3',8-cyclo-7,8-dihydroguanosine 5'-triphosphate. In Pseudomonas savastanoi pv. phaseolicola (strain 1448A / Race 6) (Pseudomonas syringae pv. phaseolicola (strain 1448A / Race 6)), this protein is GTP 3',8-cyclase.